Here is a 390-residue protein sequence, read N- to C-terminus: MSALLDRLRTDLSALAGQGLRRVRRSNALPCAPRALVDGREMLAFCSNDYLGLAAEPALATALAQASSRWGAGSGASHLVSGHYAVHDALEHRLAAFVGAERALYFSTGYMANAGIVPALVGRGDAVFADRLNHASLVDGVLLSRADMHRYPHGDLAVLARQLAGSSAARKLIVTDAVFSMDGDVAPLADLLELAERHDAWLMVDDAHGFGVLGPQGRGALADAGLQHWRLIYVGTLGKAAGVSGAFAAGHGELVEWLLQKARTYIFTTGAPPALAEALLLSLDLIEAADDRRTHLAGLIERFGAELTLSRWQRLPSRTPIQPIRIGGNEEALAVARALWDEGLWVPAIRPPTVPAGSARLRVSLTAAHTEADVLRLARTLNRLEHAAHG.

Arg22 lines the substrate pocket. 109–110 lines the pyridoxal 5'-phosphate pocket; sequence GY. His134 lines the substrate pocket. Ser180, His208, and Thr236 together coordinate pyridoxal 5'-phosphate. At Lys239 the chain carries N6-(pyridoxal phosphate)lysine. Substrate is bound at residue Thr353.

It belongs to the class-II pyridoxal-phosphate-dependent aminotransferase family. BioF subfamily. In terms of assembly, homodimer. Pyridoxal 5'-phosphate is required as a cofactor.

It catalyses the reaction 6-carboxyhexanoyl-[ACP] + L-alanine + H(+) = (8S)-8-amino-7-oxononanoate + holo-[ACP] + CO2. The protein operates within cofactor biosynthesis; biotin biosynthesis. Functionally, catalyzes the decarboxylative condensation of pimeloyl-[acyl-carrier protein] and L-alanine to produce 8-amino-7-oxononanoate (AON), [acyl-carrier protein], and carbon dioxide. The sequence is that of 8-amino-7-oxononanoate synthase from Azoarcus sp. (strain BH72).